Reading from the N-terminus, the 243-residue chain is Terpene cyclase janB (243 aa).

Transmembrane regions (helical) follow at residues 19-39 (LADLFVLGMGLGWVINYVGMV), 48-68 (YGMAIMPLCCNIAWEIVYCVF), 77-97 (LGVFAMGLLINFGVMYAAIIF), 112-132 (LPWIFCIGVLGFLTGHLALAA), 134-154 (IGPSLAYSWGAVVCQLLLSVG), 172-194 (LWLSRFLGSCCTVGFASLRWMYW), and 205-225 (LVLWSLAVFLMVDGSYGVCFW).

It belongs to the paxB family.

Its subcellular location is the membrane. It participates in secondary metabolite biosynthesis. Terpene cyclase; part of the gene cluster that mediates the biosynthesis of the indole diterpenes janthitremanes such as shearinine K or shearinine A. The geranylgeranyl diphosphate (GGPP) synthase janG catalyzes the first step in janthitremane biosynthesis via conversion of farnesyl pyrophosphate and isopentyl pyrophosphate into geranylgeranyl pyrophosphate (GGPP). Condensation of indole-3-glycerol phosphate with GGPP by the prenyl transferase janC then forms 3-geranylgeranylindole (3-GGI). Epoxidation by the FAD-dependent monooxygenase janM leads to a epoxidized-GGI that is substrate of the terpene cyclase janB for cyclization to yield paspaline. Paspaline is subsequently converted to 13-desoxypaspaline by the cytochrome P450 monooxygenase janP, via beta-PC-M6 in a series of alpha-face oxidations. The cytochrome P450 monooxygenase janQ is proposed to carry out sequential beta-face oxidation steps at C-7 and C-13 of 13-desoxypaspaline to form paspalicine and paspalinine respectively. The indole diterpene prenyltransferase janD may then convert paspalinine into shearinine K which is substrate of janO and/or additional enzymes for oxidation and cyclization to generate shearinine A. The sequence is that of Terpene cyclase janB from Penicillium janthinellum (Penicillium vitale).